Reading from the N-terminus, the 802-residue chain is Cell division cycle 5-like protein (802 aa).

HTH myb-type domains follow at residues 1–56 (MPRI…WLDP) and 57–108 (SIKK…DKAA). 2 DNA-binding regions (H-T-H motif) span residues 31–54 (WSRIASLLHRKSAKQCKARWYEWL) and 82–104 (WRTIAPIIGRTAAQCLEHYEFLL). Residues 108 to 143 (AQRDNEEETTDDPRKLKPGEIDPNPETKPARPDPID) form a disordered region. The segment covering 118–127 (DDPRKLKPGE) has biased composition (basic and acidic residues). K135 is covalently cross-linked (Glycyl lysine isopeptide (Lys-Gly) (interchain with G-Cter in SUMO2)). Residues 142–245 (IDMDEDELEM…DADFRKLRQQ (104 aa)) are a coiled coil. The Nuclear localization signal signature appears at 165–271 (KKAKRKAREK…KDKQHLKRKK (107 aa)). The interval 200–206 (KKRKKKR) is required for interaction with CTNNBL1. Residue K219 forms a Glycyl lysine isopeptide (Lys-Gly) (interchain with G-Cter in SUMO2) linkage. T227 is modified (phosphothreonine). Basic and acidic residues predominate over residues 246-262 (DLDGELRSEKEGRDRKK). The interval 246–278 (DLDGELRSEKEGRDRKKDKQHLKRKKESDLPSA) is disordered. The interaction with PPP1R8 stretch occupies residues 260-606 (RKKDKQHLKR…NKKGKTVGFG (347 aa)). A phosphoserine mark is found at S303 and S358. 6 positions are modified to phosphothreonine: T377, T385, T396, T404, T411, and T415. Residues 409–418 (LSTPFRTPSH) show a composition bias toward polar residues. The tract at residues 409 to 459 (LSTPFRTPSHGSEGLTPRSGTTPKPVINSTPGRTPLRDKLNINPEDGMADY) is disordered. S417 is subject to Phosphoserine. T424 and T430 each carry phosphothreonine. A compositionally biased stretch (polar residues) spans 426–440 (RSGTTPKPVINSTPG). S437 is subject to Phosphoserine. Residues T438 and T442 each carry the phosphothreonine modification. K487 participates in a covalent cross-link: Glycyl lysine isopeptide (Lys-Gly) (interchain with G-Cter in SUMO2). An interaction with DAPK3 region spans residues 501–659 (ELEEREIDDT…GELSSEAYNQ (159 aa)). Coiled coils occupy residues 676–701 (RYTRANLASKKDRIESLEKRLEINRG) and 764–802 (PRRLECLKEDVQRQQEREKELQHRYADLLLEKETLKAKF). The segment at 706 to 800 (EAKRAAKMEK…LLLEKETLKA (95 aa)) is interaction with PLRG1.

Belongs to the CEF1 family. In terms of assembly, homodimer. Interacts with DAPK3. Component of the precatalytic, catalytic and postcatalytic spliceosome complexes. Part of a spliceosomal 'core' complex consisting of CDC5L, PLRG1, SPF27, CCAP1, CCAP3 and CCAP6. Interacts with PLRG1, Lodestar/TTF2, and NIPP1/PPP1R8. Component of the minor spliceosome, which splices U12-type introns. Within this complex, interacts with SCNM1. Component of the PRP19-CDC5L splicing complex composed of a core complex comprising a homotetramer of PRPF19, CDC5L, PLRG1 and BCAS2, and at least three less stably associated proteins CTNNBL1, CWC15 and HSPA8. Interacts (via its C-terminus) directly in the complex with PRPF19 and BCAS2. Interacts (via its C-terminus) directly with PRGL1 (via its WD40 repeat domain); the interaction is required for mRNA splicing but not for spliceosome assembly. Also interacts with CTNNBL1. Interacts with PRPF19 (via N-terminus). Interacts with USB1. Interacts with DDX41. In terms of processing, phosphorylated on serine and threonine residues. Phosphorylation on Thr-411 and Thr-438 is required for CDC5L-mediated mRNA splicing. Has no effect on subcellular location nor on homodimerization. Phosphorylated in vitro by CDK2. Phosphorylation enhances interaction with PPP1R8.

Its subcellular location is the nucleus. It localises to the nucleus speckle. The protein resides in the cytoplasm. In terms of biological role, DNA-binding protein involved in cell cycle control. May act as a transcription activator. Plays a role in pre-mRNA splicing as core component of precatalytic, catalytic and postcatalytic spliceosomal complexes. Component of the PRP19-CDC5L complex that forms an integral part of the spliceosome and is required for activating pre-mRNA splicing. The PRP19-CDC5L complex may also play a role in the response to DNA damage (DDR). As a component of the minor spliceosome, involved in the splicing of U12-type introns in pre-mRNAs. The polypeptide is Cell division cycle 5-like protein (CDC5L) (Bos taurus (Bovine)).